The following is a 191-amino-acid chain: Xanthine phosphoribosyltransferase (191 aa).

Xanthine contacts are provided by leucine 20 and asparagine 27. A 5-phospho-alpha-D-ribose 1-diphosphate-binding site is contributed by 128–132 (ANGQA). Residue lysine 156 participates in xanthine binding.

It belongs to the purine/pyrimidine phosphoribosyltransferase family. Xpt subfamily. In terms of assembly, homodimer.

The protein localises to the cytoplasm. The catalysed reaction is XMP + diphosphate = xanthine + 5-phospho-alpha-D-ribose 1-diphosphate. The protein operates within purine metabolism; XMP biosynthesis via salvage pathway; XMP from xanthine: step 1/1. Functionally, converts the preformed base xanthine, a product of nucleic acid breakdown, to xanthosine 5'-monophosphate (XMP), so it can be reused for RNA or DNA synthesis. The chain is Xanthine phosphoribosyltransferase from Acinetobacter baylyi (strain ATCC 33305 / BD413 / ADP1).